Reading from the N-terminus, the 342-residue chain is Nucleoid-associated protein Shewmr4_2217 (342 aa).

It belongs to the YejK family.

It is found in the cytoplasm. The protein localises to the nucleoid. The protein is Nucleoid-associated protein Shewmr4_2217 of Shewanella sp. (strain MR-4).